The primary structure comprises 283 residues: Probable endonuclease 4 (283 aa).

The Zn(2+) site is built by histidine 69, histidine 109, glutamate 145, aspartate 179, histidine 182, histidine 216, aspartate 229, histidine 231, and glutamate 261.

It belongs to the AP endonuclease 2 family. Requires Zn(2+) as cofactor.

The enzyme catalyses Endonucleolytic cleavage to 5'-phosphooligonucleotide end-products.. Functionally, endonuclease IV plays a role in DNA repair. It cleaves phosphodiester bonds at apurinic or apyrimidinic (AP) sites, generating a 3'-hydroxyl group and a 5'-terminal sugar phosphate. The protein is Probable endonuclease 4 of Campylobacter concisus (strain 13826).